Consider the following 493-residue polypeptide: Glutamyl-tRNA(Gln) amidotransferase subunit A (493 aa).

Catalysis depends on charge relay system residues lysine 78 and serine 158. Catalysis depends on serine 182, which acts as the Acyl-ester intermediate.

The protein belongs to the amidase family. GatA subfamily. As to quaternary structure, heterotrimer of A, B and C subunits.

The catalysed reaction is L-glutamyl-tRNA(Gln) + L-glutamine + ATP + H2O = L-glutaminyl-tRNA(Gln) + L-glutamate + ADP + phosphate + H(+). Functionally, allows the formation of correctly charged Gln-tRNA(Gln) through the transamidation of misacylated Glu-tRNA(Gln) in organisms which lack glutaminyl-tRNA synthetase. The reaction takes place in the presence of glutamine and ATP through an activated gamma-phospho-Glu-tRNA(Gln). The protein is Glutamyl-tRNA(Gln) amidotransferase subunit A of Rickettsia canadensis (strain McKiel).